The sequence spans 338 residues: Lipoate-protein ligase A (338 aa).

The region spanning Pro-29–Val-216 is the BPL/LPL catalytic domain. ATP is bound by residues Arg-71, Gly-76–Phe-79, and Lys-134. Lys-134 is a binding site for (R)-lipoate.

The protein belongs to the LplA family. In terms of assembly, monomer.

Its subcellular location is the cytoplasm. The catalysed reaction is L-lysyl-[lipoyl-carrier protein] + (R)-lipoate + ATP = N(6)-[(R)-lipoyl]-L-lysyl-[lipoyl-carrier protein] + AMP + diphosphate + H(+). It participates in protein modification; protein lipoylation via exogenous pathway; protein N(6)-(lipoyl)lysine from lipoate: step 1/2. The protein operates within protein modification; protein lipoylation via exogenous pathway; protein N(6)-(lipoyl)lysine from lipoate: step 2/2. Functionally, catalyzes both the ATP-dependent activation of exogenously supplied lipoate to lipoyl-AMP and the transfer of the activated lipoyl onto the lipoyl domains of lipoate-dependent enzymes. The chain is Lipoate-protein ligase A from Salmonella arizonae (strain ATCC BAA-731 / CDC346-86 / RSK2980).